Here is a 689-residue protein sequence, read N- to C-terminus: Elongation factor G (689 aa).

Residues 8–283 form the tr-type G domain; sequence SKCRNIGIMA…AVVDFLPAPN (276 aa). Residues 17-24, 81-85, and 135-138 each bind GTP; these read AHIDAGKT, DTPGH, and NKMD.

The protein belongs to the TRAFAC class translation factor GTPase superfamily. Classic translation factor GTPase family. EF-G/EF-2 subfamily.

It is found in the cytoplasm. Its function is as follows. Catalyzes the GTP-dependent ribosomal translocation step during translation elongation. During this step, the ribosome changes from the pre-translocational (PRE) to the post-translocational (POST) state as the newly formed A-site-bound peptidyl-tRNA and P-site-bound deacylated tRNA move to the P and E sites, respectively. Catalyzes the coordinated movement of the two tRNA molecules, the mRNA and conformational changes in the ribosome. The sequence is that of Elongation factor G from Ehrlichia ruminantium (strain Welgevonden).